A 384-amino-acid chain; its full sequence is Tryptophan--tRNA ligase (384 aa).

The short motif at 81–89 (PSGPMHIGH) is the 'HIGH' region element. Positions 252-256 (KMSAS) match the 'KMSKS' region motif.

This sequence belongs to the class-I aminoacyl-tRNA synthetase family.

The protein localises to the cytoplasm. The catalysed reaction is tRNA(Trp) + L-tryptophan + ATP = L-tryptophyl-tRNA(Trp) + AMP + diphosphate + H(+). The polypeptide is Tryptophan--tRNA ligase (Thermococcus sibiricus (strain DSM 12597 / MM 739)).